The primary structure comprises 288 residues: Putative transcription factor kapC (288 aa).

Over residues 1 to 10 the composition is skewed to pro residues; it reads MQPTLAPAPH. Residues 1–121 are disordered; that stretch reads MQPTLAPAPH…AAQRAFRQRK (121 aa). A compositionally biased stretch (low complexity) spans 26 to 41; it reads HDQLLAAHQHLSHPQQ. Over residues 42–54 the composition is skewed to pro residues; it reads ARPPPPPPQPPHM. Residues 84–93 are compositionally biased toward polar residues; that stretch reads QPDLSGQESP. The bZIP domain maps to 100 to 163; that stretch reads PLSTSKRAAQ…EYIINLQSRL (64 aa). A basic motif region spans residues 101-124; the sequence is LSTSKRAAQNRAAQRAFRQRKEAH. The span at 106–116 shows a compositional bias: low complexity; sequence RAAQNRAAQRA. The tract at residues 128 to 159 is leucine-zipper; sequence LEGKVKAYETMGEAIKALQAENYQLREYIINL. Disordered stretches follow at residues 172 to 226 and 242 to 288; these read ELPG…NDDM and PPTE…PLIS. Pro residues predominate over residues 202–212; the sequence is PVPPPTAPQQP. A compositionally biased stretch (low complexity) spans 213-222; the sequence is QPAQNQASAP.

It belongs to the bZIP family.

The protein localises to the nucleus. Its function is as follows. Putative transcription factor. The sequence is that of Putative transcription factor kapC (kapC) from Aspergillus clavatus (strain ATCC 1007 / CBS 513.65 / DSM 816 / NCTC 3887 / NRRL 1 / QM 1276 / 107).